We begin with the raw amino-acid sequence, 118 residues long: UPF0295 protein BCE_0593 (118 aa).

A run of 2 helical transmembrane segments spans residues 12–32 and 43–63; these read IRTF…LGVF and FMMV…WIGM.

Belongs to the UPF0295 family.

Its subcellular location is the cell membrane. The sequence is that of UPF0295 protein BCE_0593 from Bacillus cereus (strain ATCC 10987 / NRS 248).